Here is a 176-residue protein sequence, read N- to C-terminus: Acireductone dioxygenase (176 aa).

Fe(2+) contacts are provided by histidine 91, histidine 93, glutamate 97, and histidine 136. Ni(2+) is bound by residues histidine 91, histidine 93, glutamate 97, and histidine 136.

It belongs to the acireductone dioxygenase (ARD) family. In terms of assembly, monomer. The cofactor is Fe(2+). Ni(2+) serves as cofactor.

The catalysed reaction is 1,2-dihydroxy-5-(methylsulfanyl)pent-1-en-3-one + O2 = 3-(methylsulfanyl)propanoate + CO + formate + 2 H(+). It catalyses the reaction 1,2-dihydroxy-5-(methylsulfanyl)pent-1-en-3-one + O2 = 4-methylsulfanyl-2-oxobutanoate + formate + 2 H(+). It functions in the pathway amino-acid biosynthesis; L-methionine biosynthesis via salvage pathway; L-methionine from S-methyl-5-thio-alpha-D-ribose 1-phosphate: step 5/6. Catalyzes 2 different reactions between oxygen and the acireductone 1,2-dihydroxy-3-keto-5-methylthiopentene (DHK-MTPene) depending upon the metal bound in the active site. Fe-containing acireductone dioxygenase (Fe-ARD) produces formate and 2-keto-4-methylthiobutyrate (KMTB), the alpha-ketoacid precursor of methionine in the methionine recycle pathway. Ni-containing acireductone dioxygenase (Ni-ARD) produces methylthiopropionate, carbon monoxide and formate, and does not lie on the methionine recycle pathway. This chain is Acireductone dioxygenase, found in Picosynechococcus sp. (strain ATCC 27264 / PCC 7002 / PR-6) (Agmenellum quadruplicatum).